A 170-amino-acid chain; its full sequence is Mediator of RNA polymerase II transcription subunit 10 (170 aa).

It belongs to the Mediator complex subunit 10 family. Component of the Mediator complex.

It localises to the nucleus. Functionally, component of the Mediator complex, a coactivator involved in the regulated transcription of nearly all RNA polymerase II-dependent genes. Mediator functions as a bridge to convey information from gene-specific regulatory proteins to the basal RNA polymerase II transcription machinery. Mediator is recruited to promoters by direct interactions with regulatory proteins and serves as a scaffold for the assembly of a functional preinitiation complex with RNA polymerase II and the general transcription factors. This is Mediator of RNA polymerase II transcription subunit 10 (NUT2) from Candida albicans (strain SC5314 / ATCC MYA-2876) (Yeast).